A 513-amino-acid chain; its full sequence is Ribonuclease Y (513 aa).

A helical transmembrane segment spans residues 3–23; it reads IGTLLLFTFLGLVAGATAVWL. Residues 77 to 96 are disordered; the sequence is LQSVESKLKSREQTLNQRQE. Over residues 82–96 the composition is skewed to basic and acidic residues; that stretch reads SKLKSREQTLNQRQE. One can recognise a KH domain in the interval 203–263; that stretch reads SVTVFHIESD…VRREIARLAL (61 aa). Residues 329 to 422 form the HD domain; that stretch reads LLQHSRETAN…VQVCDAISGA (94 aa).

It belongs to the RNase Y family.

The protein resides in the cell membrane. In terms of biological role, endoribonuclease that initiates mRNA decay. This is Ribonuclease Y from Porphyromonas gingivalis (strain ATCC BAA-308 / W83).